Here is a 1221-residue protein sequence, read N- to C-terminus: 2-oxoglutarate dehydrogenase E1/E2 component (1221 aa).

Residues 2–40 form a 2-oxoglutarate dehydrogenase E1, N-terminal part region; that stretch reads SSASTFGQNAWLVDEMFQQFQKDPKSVDKEWRELFEAQG. The disordered stretch occupies residues 22–107; that stretch reads QKDPKSVDKE…KLPEPGQTPI (86 aa). Residues 23-36 show a composition bias toward basic and acidic residues; that stretch reads KDPKSVDKEWRELF. Polar residues predominate over residues 41-52; the sequence is GPNTTPATTEAQ. Residues 41-89 are linker; the sequence is GPNTTPATTEAQPSAPKESAKPAPKAAPAAKAAPRVETKPADKTAPKAK. Positions 53 to 73 are enriched in low complexity; sequence PSAPKESAKPAPKAAPAAKAA. The segment covering 74–90 has biased composition (basic and acidic residues); the sequence is PRVETKPADKTAPKAKE. Residues 90–337 form a succinyltransferase E2 region; the sequence is ESSVPQQPKL…LRTMSRLLTD (248 aa). The active-site Proton acceptor; for succinyltransferase activity is histidine 316. The segment at 338–1221 is 2-oxoglutarate dehydrogenase E1, C-terminal part; it reads DSFWDEIFDA…KQLIDEAFEA (884 aa). Arginine 544 is a thiamine diphosphate binding site. Residues histidine 583 and serine 608 each contribute to the 2-oxoglutarate site. Positions 608, 610, 645, 646, 647, and 678 each coordinate thiamine diphosphate. Position 645 (aspartate 645) interacts with Mg(2+). The Mg(2+) site is built by asparagine 678 and isoleucine 680. Residue histidine 1017 participates in 2-oxoglutarate binding. Positions 1035, 1051, 1087, 1090, and 1144 each coordinate acetyl-CoA.

In the N-terminal section; belongs to the alpha-ketoglutarate dehydrogenase family. It in the C-terminal section; belongs to the 2-oxoacid dehydrogenase family. As to quaternary structure, homodimer. Part of an unusual ODH/PDH supercomplex, consisting of AceE (E1), AceF (E2), and Lpd (E3) together with OdhA (E1+E2). Interacts with the FHA domain of unphosphorylated OdhI via its C-terminal dehydrogenase domain. Requires Mg(2+) as cofactor. Thiamine diphosphate is required as a cofactor.

The catalysed reaction is N(6)-[(R)-lipoyl]-L-lysyl-[protein] + 2-oxoglutarate + H(+) = N(6)-[(R)-S(8)-succinyldihydrolipoyl]-L-lysyl-[protein] + CO2. It carries out the reaction N(6)-[(R)-dihydrolipoyl]-L-lysyl-[protein] + succinyl-CoA = N(6)-[(R)-S(8)-succinyldihydrolipoyl]-L-lysyl-[protein] + CoA. Its pathway is carbohydrate metabolism; tricarboxylic acid cycle; succinyl-CoA from 2-oxoglutarate (dehydrogenase route): step 1/1. With respect to regulation, inhibited by unphosphorylated OdhI, but not by phosphorylated OdhI. Its function is as follows. Catalyzes the E1 and E2 reactions as part of 2-oxoglutarate dehydrogenase (ODH) activity, to convert 2-oxoglutarate to succinyl-CoA and CO(2). OdhA has reductase activity with 2-oxoglutarate but does not react with pyruvate, and also displays transsuccinylase but no transacetylase activity. Since OdhA is not lipoylated, the succinyltransferase activity of its E2 domain is dependent on lipoyl residues of the acetyltransferase AceF. In Corynebacterium glutamicum (strain ATCC 13032 / DSM 20300 / JCM 1318 / BCRC 11384 / CCUG 27702 / LMG 3730 / NBRC 12168 / NCIMB 10025 / NRRL B-2784 / 534), this protein is 2-oxoglutarate dehydrogenase E1/E2 component.